Consider the following 140-residue polypeptide: LSAADKGHVKAAWGKVGSHAAEYGAEALERMFLSFPTTKTYFPHFDLSHGSAQVKGHGAKVAAALTKAVDHLDDLPGALSDLSDLHAHKLRVDPVNFKLLSHSLLVTLASHLPGDFTPAVHASLDKFLANVSTVLTSKYR.

Residues 1 to 140 (LSAADKGHVK…VSTVLTSKYR (140 aa)) form the Globin domain. S2 is subject to Phosphoserine. N6-succinyllysine is present on residues K6 and K10. The residue at position 15 (K15) is an N6-acetyllysine; alternate. At K15 the chain carries N6-succinyllysine; alternate. Y23 carries the post-translational modification Phosphotyrosine. S34 bears the Phosphoserine mark. The residue at position 39 (K39) is an N6-succinyllysine. The residue at position 48 (S48) is a Phosphoserine. H57 serves as a coordination point for O2. H86 serves as a coordination point for heme b. S101 is modified (phosphoserine). The residue at position 107 (T107) is a Phosphothreonine. S123 is subject to Phosphoserine. Phosphothreonine is present on residues T133 and T136. S137 is subject to Phosphoserine.

Belongs to the globin family. As to quaternary structure, heterotetramer of two alpha chains and two beta chains. As to expression, red blood cells.

Functionally, involved in oxygen transport from the lung to the various peripheral tissues. Hemopressin acts as an antagonist peptide of the cannabinoid receptor CNR1. Hemopressin-binding efficiently blocks cannabinoid receptor CNR1 and subsequent signaling. This is Hemoglobin subunit alpha (HBA) from Tragelaphus strepsiceros (Greater kudu).